Here is a 407-residue protein sequence, read N- to C-terminus: Phenazine 1,6-dicarboxylic acid hydroxylase PhzS (407 aa).

Residues Gly17, Val134, and Asp313 each coordinate FAD.

It depends on FAD as a cofactor.

It catalyses the reaction phenazine-1,6-dicarboxylate + NADH + O2 + 2 H(+) = 6-hydroxyphenazine-1-carboxylate + CO2 + NAD(+) + H2O. It carries out the reaction 6-hydroxyphenazine-1-carboxylate + NADH + O2 + 2 H(+) = 1,6-dihydroxyphenazine + CO2 + NAD(+) + H2O. The enzyme catalyses phenazine-1-carboxylate + NADH + O2 + 2 H(+) = 1-hydroxyphenazine + CO2 + NAD(+) + H2O. Involved in the biosynthesis of phenazine natural products including myxin, an N(5),N(10)-dioxide phenazine antiobiotic, which has antimicrobial activity. Catalyzes the decarboxylative hydroxylations of phenazine 1,6-dicarboxylic acid (PDC) to produce 1,6-dihydroxyphenazine (DHP). Low activity with phenazine 1-carboxylic acid (PCA) to produce 1-hydroxyphenazine. In Lysobacter antibioticus, this protein is Phenazine 1,6-dicarboxylic acid hydroxylase PhzS.